Reading from the N-terminus, the 431-residue chain is Adenylosuccinate synthetase (431 aa).

GTP contacts are provided by residues 12–18 (GDEGKGK) and 40–42 (GHT). D13 functions as the Proton acceptor in the catalytic mechanism. 2 residues coordinate Mg(2+): D13 and G40. IMP is bound by residues 13–16 (DEGK), 38–41 (NAGH), T128, R142, Q223, T238, and R301. Residue H41 is the Proton donor of the active site. 297-303 (TVTGRPR) contacts substrate. GTP contacts are provided by residues R303, 329 to 331 (SID), and 411 to 413 (SVG).

Belongs to the adenylosuccinate synthetase family. As to quaternary structure, homodimer. The cofactor is Mg(2+).

The protein localises to the cytoplasm. It catalyses the reaction IMP + L-aspartate + GTP = N(6)-(1,2-dicarboxyethyl)-AMP + GDP + phosphate + 2 H(+). It functions in the pathway purine metabolism; AMP biosynthesis via de novo pathway; AMP from IMP: step 1/2. In terms of biological role, plays an important role in the de novo pathway of purine nucleotide biosynthesis. Catalyzes the first committed step in the biosynthesis of AMP from IMP. In Lacticaseibacillus casei (strain BL23) (Lactobacillus casei), this protein is Adenylosuccinate synthetase.